A 255-amino-acid polypeptide reads, in one-letter code: Pyrroloquinoline-quinone synthase (255 aa).

Belongs to the PqqC family.

It catalyses the reaction 6-(2-amino-2-carboxyethyl)-7,8-dioxo-1,2,3,4,7,8-hexahydroquinoline-2,4-dicarboxylate + 3 O2 = pyrroloquinoline quinone + 2 H2O2 + 2 H2O + H(+). The protein operates within cofactor biosynthesis; pyrroloquinoline quinone biosynthesis. In terms of biological role, ring cyclization and eight-electron oxidation of 3a-(2-amino-2-carboxyethyl)-4,5-dioxo-4,5,6,7,8,9-hexahydroquinoline-7,9-dicarboxylic-acid to PQQ. In Cereibacter sphaeroides (strain KD131 / KCTC 12085) (Rhodobacter sphaeroides), this protein is Pyrroloquinoline-quinone synthase.